A 447-amino-acid polypeptide reads, in one-letter code: Signal recognition particle 54 kDa protein (447 aa).

Residues 103 to 110, 185 to 189, and 245 to 248 each bind GTP; these read GVQGSGKT, DTAGR, and TKMD.

The protein belongs to the GTP-binding SRP family. SRP54 subfamily. Part of the signal recognition particle protein translocation system, which is composed of SRP and FtsY. Archaeal SRP consists of a 7S RNA molecule of 300 nucleotides and two protein subunits: SRP54 and SRP19.

The protein localises to the cytoplasm. The enzyme catalyses GTP + H2O = GDP + phosphate + H(+). Its function is as follows. Involved in targeting and insertion of nascent membrane proteins into the cytoplasmic membrane. Binds to the hydrophobic signal sequence of the ribosome-nascent chain (RNC) as it emerges from the ribosomes. The SRP-RNC complex is then targeted to the cytoplasmic membrane where it interacts with the SRP receptor FtsY. This is Signal recognition particle 54 kDa protein from Saccharolobus islandicus (strain Y.N.15.51 / Yellowstone #2) (Sulfolobus islandicus).